A 520-amino-acid chain; its full sequence is 3-phosphoshikimate 1-carboxyvinyltransferase, chloroplastic (520 aa).

The N-terminal 76 residues, 1–76 (MAQISSMAQG…RISASVATAE (76 aa)), are a transit peptide targeting the chloroplast. Residues Lys-99, Ser-100, and Arg-104 each contribute to the 3-phosphoshikimate site. Lys-99 is a binding site for phosphoenolpyruvate. Residues Gly-177 and Arg-207 each contribute to the phosphoenolpyruvate site. Ser-254, Ser-255, Gln-256, Ser-282, Asp-407, and Lys-434 together coordinate 3-phosphoshikimate. Phosphoenolpyruvate is bound at residue Gln-256. Asp-407 functions as the Proton acceptor in the catalytic mechanism. The phosphoenolpyruvate site is built by Arg-438, Arg-480, and Lys-505.

The protein belongs to the EPSP synthase family.

It localises to the plastid. It is found in the chloroplast. The catalysed reaction is 3-phosphoshikimate + phosphoenolpyruvate = 5-O-(1-carboxyvinyl)-3-phosphoshikimate + phosphate. Its pathway is metabolic intermediate biosynthesis; chorismate biosynthesis; chorismate from D-erythrose 4-phosphate and phosphoenolpyruvate: step 6/7. Its function is as follows. Catalyzes the transfer of the enolpyruvyl moiety of phosphoenolpyruvate (PEP) to the 5-hydroxyl of shikimate-3-phosphate (S3P) to produce enolpyruvyl shikimate-3-phosphate and inorganic phosphate. The protein is 3-phosphoshikimate 1-carboxyvinyltransferase, chloroplastic of Solanum lycopersicum (Tomato).